Here is a 288-residue protein sequence, read N- to C-terminus: POU domain class 2-associating factor 2 (288 aa).

The OCA domain maps to 10 to 32 (KRVYQGVRVKHTVKDLLAEKRSG). Disordered stretches follow at residues 24-52 (DLLAEKRSGQTSNSRLNGSVSSSQSPFVQ) and 247-274 (PPKVGPLSPDEEADTGSLHDPSPWVKED). Over residues 35 to 48 (SNSRLNGSVSSSQS) the composition is skewed to low complexity.

Belongs to the POU2AF family. Interacts with POU2F3 (via the POU domain) in a DNA-dependent manner; this interaction recruits POU2AF2 to chromatin and increases POU2F3 transactivation activity. Expressed in tuft cells of colon mucosa, as well as in small intestine and thymus.

The protein localises to the cytoplasm. Its subcellular location is the cytosol. It is found in the nucleus. Its function is as follows. Transcriptional coactivator of POU2F3. This complex drives the development of tuft cells, a rare chemosensory cells that coordinate immune and neural functions within mucosal epithelial tissues. This Homo sapiens (Human) protein is POU domain class 2-associating factor 2.